Reading from the N-terminus, the 205-residue chain is GTP cyclohydrolase 1 (205 aa).

Zn(2+)-binding residues include Cys-95, His-98, and Cys-166.

This sequence belongs to the GTP cyclohydrolase I family. In terms of assembly, toroid-shaped homodecamer, composed of two pentamers of five dimers.

It catalyses the reaction GTP + H2O = 7,8-dihydroneopterin 3'-triphosphate + formate + H(+). Its pathway is cofactor biosynthesis; 7,8-dihydroneopterin triphosphate biosynthesis; 7,8-dihydroneopterin triphosphate from GTP: step 1/1. The chain is GTP cyclohydrolase 1 from Maricaulis maris (strain MCS10) (Caulobacter maris).